A 317-amino-acid polypeptide reads, in one-letter code: Curved DNA-binding protein (317 aa).

The J domain maps to 5-69 (DYYKILGVEP…QKRAEFDEIR (65 aa)).

Its subcellular location is the cytoplasm. It is found in the nucleoid. Its function is as follows. DNA-binding protein that preferentially recognizes a curved DNA sequence. It is probably a functional analog of DnaJ; displays overlapping activities with DnaJ, but functions under different conditions, probably acting as a molecular chaperone in an adaptive response to environmental stresses other than heat shock. Lacks autonomous chaperone activity; binds native substrates and targets them for recognition by DnaK. Its activity is inhibited by the binding of CbpM. The protein is Curved DNA-binding protein of Pseudomonas putida (strain W619).